Reading from the N-terminus, the 348-residue chain is Sulfate/thiosulfate import ATP-binding protein CysA (348 aa).

Residues 3 to 237 (IRIQELRKQF…PSSPFVYSFV (235 aa)) enclose the ABC transporter domain. 35 to 42 (GPSGSGKT) contributes to the ATP binding site.

The protein belongs to the ABC transporter superfamily. Sulfate/tungstate importer (TC 3.A.1.6) family. As to quaternary structure, the complex is composed of two ATP-binding proteins (CysA), two transmembrane proteins (CysT and CysW) and a solute-binding protein (CysP).

It is found in the cell inner membrane. It carries out the reaction sulfate(out) + ATP + H2O = sulfate(in) + ADP + phosphate + H(+). The catalysed reaction is thiosulfate(out) + ATP + H2O = thiosulfate(in) + ADP + phosphate + H(+). Part of the ABC transporter complex CysAWTP involved in sulfate/thiosulfate import. Responsible for energy coupling to the transport system. The protein is Sulfate/thiosulfate import ATP-binding protein CysA of Xylella fastidiosa (strain Temecula1 / ATCC 700964).